A 679-amino-acid chain; its full sequence is Transketolase 10 (679 aa).

H40 provides a ligand contact to substrate. Thiamine diphosphate contacts are provided by residues H80 and 129–131 (GPL). Residue D170 coordinates Mg(2+). The thiamine diphosphate site is built by G171 and N200. Residues N200 and I202 each coordinate Mg(2+). 3 residues coordinate substrate: H277, R371, and S398. Residue H277 coordinates thiamine diphosphate. Thiamine diphosphate contacts are provided by E425 and F452. Catalysis depends on E425, which acts as the Proton donor. Substrate is bound by residues H476, D484, and R535.

Belongs to the transketolase family. Homodimer. It depends on Mg(2+) as a cofactor. Ca(2+) is required as a cofactor. Mn(2+) serves as cofactor. Requires Co(2+) as cofactor. The cofactor is thiamine diphosphate. Leaves.

It carries out the reaction D-sedoheptulose 7-phosphate + D-glyceraldehyde 3-phosphate = aldehydo-D-ribose 5-phosphate + D-xylulose 5-phosphate. In terms of biological role, could be involved in the conversion of sugars, which are a major phenomenon in the rehydration process. Functionally, catalyzes the transfer of a two-carbon ketol group from a ketose donor to an aldose acceptor, via a covalent intermediate with the cofactor thiamine pyrophosphate. This chain is Transketolase 10 (TKT10), found in Craterostigma plantagineum (Blue gem).